We begin with the raw amino-acid sequence, 499 residues long: MPSDFFLQPLDGGPRVPVGPGQTVIGRGPLLGITDKRVSRRHAILEVVDSQLRIKPIHRNPCFYQSSEKSQHSPMETQVWSQLHPGDSFSLLLDKYAFRVFSAESEVEMECTLRNSQMLDEDDILSEMQKSPVVNLPDKTTGASQLQGSPEITKTKCPTIDPMSSSGECRAFSEHQPRPTQRKRILPAWMLAESLSDQSLSTPAEGGDKDVIQRSGKAGTCEDRTPGNTSWHGKKRLSPSGNSKSVSAEQDPGKKCRKADQEGPGVSSENVPESSSSNIVKDPDVDIVKTNKQKDGILIEELGEVSKHKAATKPTTNEEGESCARVQSKSPPEKSQGCHPESSSAPSSPDALHTDTADPVLGCSEESKVRRTACMYGANCYRRNPLHFQHFSHPGDSDYGEVHGTDEGVIGDRPECPYGASCYRKNPQHKMEYRHSALPARVALDEDDDDVGQPSDDEDEEDYEPTDEDSDWHPGKDDEEQEDVDELLKEAKSSLHLKH.

An FHA-like domain is found at 1–108 (MPSDFFLQPL…RVFSAESEVE (108 aa)). Ser116 carries the phosphoserine; by ATM modification. Disordered stretches follow at residues 134 to 183 (VNLP…TQRK), 197 to 292 (DQSL…KTNK), and 305 to 358 (VSKH…DTAD). The span at 141–152 (TGASQLQGSPEI) shows a compositional bias: polar residues. Residue Ser149 is modified to Phosphoserine. A KBM motif is present at residues 182 to 191 (RKRILPAWML). Positions 239–248 (PSGNSKSVSA) are enriched in polar residues. The span at 251 to 261 (DPGKKCRKADQ) shows a compositional bias: basic and acidic residues. The span at 264 to 278 (PGVSSENVPESSSSN) shows a compositional bias: low complexity. A compositionally biased stretch (basic and acidic residues) spans 281 to 292 (KDPDVDIVKTNK). Low complexity predominate over residues 340 to 349 (PESSSAPSSP). The a glycoprotein site is built by Arg371, Tyr376, Tyr381, and Arg382. The PBZ-type 1 zinc finger occupies 372 to 393 (TACMYGANCYRRNPLHFQHFSH). Residues 401-411 (EVHGTDEGVIG) form a flexible linker region. The segment at 414–435 (PECPYGASCYRKNPQHKMEYRH) adopts a PBZ-type 2 zinc-finger fold. The a glycoprotein site is built by Tyr418, Tyr423, and Arg424. Residues 440-499 (ARVALDEDDDDVGQPSDDEDEEDYEPTDEDSDWHPGKDDEEQEDVDELLKEAKSSLHLKH) form a disordered region. The span at 445–470 (DEDDDDVGQPSDDEDEEDYEPTDEDS) shows a compositional bias: acidic residues. The NAP1L motif signature appears at 463–487 (YEPTDEDSDWHPGKDDEEQEDVDEL).

Belongs to the APLF family. In terms of assembly, interacts with LIG4. Interacts with PARP1. Interacts with XRCC4. Interacts (via KBM motif) with XRCC5 and XRCC6; promoting recruitment to DNA damage sites. Interacts with XRCC1. Interacts (via C-terminal disordered region) with histones; interacts with histone H2A, H2B and H3-H4. Post-translationally, poly-ADP-ribosylated. In addition to binding non covalently poly-ADP-ribose via its PBZ-type zinc fingers, the protein is also covalently poly-ADP-ribosylated by PARP1. In terms of processing, phosphorylated in an ATM-dependent manner upon double-strand DNA break.

It is found in the nucleus. The protein resides in the chromosome. Its subcellular location is the cytoplasm. It localises to the cytosol. Its function is as follows. Histone chaperone involved in single-strand and double-strand DNA break repair. Recruited to sites of DNA damage through interaction with branched poly-ADP-ribose chains, a polymeric post-translational modification synthesized transiently at sites of chromosomal damage to accelerate DNA strand break repair reactions. Following recruitment to DNA damage sites, acts as a histone chaperone that mediates histone eviction during DNA repair and promotes recruitment of histone variant MACROH2A1. Also has a nuclease activity: displays apurinic-apyrimidinic (AP) endonuclease and 3'-5' exonuclease activities in vitro. Also able to introduce nicks at hydroxyuracil and other types of pyrimidine base damage. Together with PARP3, promotes the retention of the LIG4-XRCC4 complex on chromatin and accelerate DNA ligation during non-homologous end-joining (NHEJ). Also acts as a negative regulator of cell pluripotency by promoting histone exchange. Required for the embryo implantation during the epithelial to mesenchymal transition in females. The chain is Aprataxin and PNK-like factor (Aplf) from Mus musculus (Mouse).